A 257-amino-acid polypeptide reads, in one-letter code: Ribonuclease HII (257 aa).

An RNase H type-2 domain is found at 70–257 (EFIAGIDEVG…PIKSMVAGGN (188 aa)). The a divalent metal cation site is built by aspartate 76, glutamate 77, and aspartate 168.

It belongs to the RNase HII family. It depends on Mn(2+) as a cofactor. Requires Mg(2+) as cofactor.

The protein localises to the cytoplasm. The enzyme catalyses Endonucleolytic cleavage to 5'-phosphomonoester.. Endonuclease that specifically degrades the RNA of RNA-DNA hybrids. The polypeptide is Ribonuclease HII (Streptococcus suis (strain 98HAH33)).